Consider the following 615-residue polypeptide: Sodium-dependent neutral amino acid transporter B(0)AT3 (615 aa).

Topologically, residues M1–Y26 are cytoplasmic. A helical membrane pass occupies residues L27–C47. Residues H48 to G52 lie on the Extracellular side of the membrane. A helical transmembrane segment spans residues G53 to I73. Over E74–S105 the chain is Cytoplasmic. A helical transmembrane segment spans residues V106 to L126. The Extracellular portion of the chain corresponds to N127–T177. N143 and N167 each carry an N-linked (GlcNAc...) asparagine glycan. A helical transmembrane segment spans residues I178 to I198. Residues R199–K206 lie on the Cytoplasmic side of the membrane. The chain crosses the membrane as a helical span at residues V207–L227. The Extracellular portion of the chain corresponds to T228 to D255. A helical transmembrane segment spans residues A256–S276. Over Y277 to T290 the chain is Cytoplasmic. A helical transmembrane segment spans residues I291 to G311. Residues F312 to G397 lie on the Extracellular side of the membrane. N353 is a glycosylation site (N-linked (GlcNAc...) asparagine). A helical membrane pass occupies residues A398–F418. Over G419–T442 the chain is Cytoplasmic. A helical membrane pass occupies residues M443–G463. Topologically, residues S464–S472 are extracellular. Residues F473 to V493 form a helical membrane-spanning segment. Residues Y494–R520 lie on the Cytoplasmic side of the membrane. A helical membrane pass occupies residues V521 to S541. Residues S542 to C571 lie on the Extracellular side of the membrane. The helical transmembrane segment at V572–F592 threads the bilayer. The Cytoplasmic portion of the chain corresponds to Q593–C615.

The protein belongs to the sodium:neurotransmitter symporter (SNF) (TC 2.A.22) family. SLC6A18 subfamily. As to quaternary structure, interacts with CLTRN; this interaction regulates the trafficking of SLC6A18 to the cell membrane and its activity. In terms of tissue distribution, kidney-specific expression.

Its subcellular location is the apical cell membrane. It is found in the cell membrane. The catalysed reaction is L-alanine(out) + chloride(out) + 2 Na(+)(out) = L-alanine(in) + chloride(in) + 2 Na(+)(in). It catalyses the reaction glycine(out) + chloride(out) + 2 Na(+)(out) = glycine(in) + chloride(in) + 2 Na(+)(in). The enzyme catalyses L-methionine(out) + chloride(out) + 2 Na(+)(out) = L-methionine(in) + chloride(in) + 2 Na(+)(in). It carries out the reaction L-valine(out) + chloride(out) + 2 Na(+)(out) = L-valine(in) + chloride(in) + 2 Na(+)(in). The catalysed reaction is L-isoleucine(out) + chloride(out) + 2 Na(+)(out) = L-isoleucine(in) + chloride(in) + 2 Na(+)(in). It catalyses the reaction L-serine(out) + chloride(out) + 2 Na(+)(out) = L-serine(in) + chloride(in) + 2 Na(+)(in). The enzyme catalyses L-leucine(out) + chloride(out) + 2 Na(+)(out) = L-leucine(in) + chloride(in) + 2 Na(+)(in). Symporter that transports one amino acid molecule together with two sodium and one chloride ions in kidneys and plays a role in the neutral amino acids reabsorption. Preferentially transports neutral amino acids such as L-glycine and L-alanine but also other neutral amino acids. Required CLTRN for cell surface expression and for its amino acid transporter activity. The transport mechanism is pH-independent. The chain is Sodium-dependent neutral amino acid transporter B(0)AT3 from Rattus norvegicus (Rat).